The sequence spans 357 residues: Carbamoyl phosphate synthase small chain (357 aa).

Residues 1–168 (MSKRLLILED…STTTAYPSPN (168 aa)) are CPSase. L-glutamine-binding residues include Ser-46, Gly-220, and Gly-222. Positions 172-357 (KVVVVDFGLK…FMDLMDNFKK (186 aa)) constitute a Glutamine amidotransferase type-1 domain. The active-site Nucleophile is Cys-247. Residues Leu-248, Gln-251, Asn-289, Gly-291, and Tyr-292 each coordinate L-glutamine. Residues His-331 and Asp-333 contribute to the active site.

It belongs to the CarA family. In terms of assembly, composed of two chains; the small (or glutamine) chain promotes the hydrolysis of glutamine to ammonia, which is used by the large (or ammonia) chain to synthesize carbamoyl phosphate. Tetramer of heterodimers (alpha,beta)4.

It carries out the reaction hydrogencarbonate + L-glutamine + 2 ATP + H2O = carbamoyl phosphate + L-glutamate + 2 ADP + phosphate + 2 H(+). The catalysed reaction is L-glutamine + H2O = L-glutamate + NH4(+). Its pathway is amino-acid biosynthesis; L-arginine biosynthesis; carbamoyl phosphate from bicarbonate: step 1/1. The protein operates within pyrimidine metabolism; UMP biosynthesis via de novo pathway; (S)-dihydroorotate from bicarbonate: step 1/3. In terms of biological role, small subunit of the glutamine-dependent carbamoyl phosphate synthetase (CPSase). CPSase catalyzes the formation of carbamoyl phosphate from the ammonia moiety of glutamine, carbonate, and phosphate donated by ATP, constituting the first step of 2 biosynthetic pathways, one leading to arginine and/or urea and the other to pyrimidine nucleotides. The small subunit (glutamine amidotransferase) binds and cleaves glutamine to supply the large subunit with the substrate ammonia. This Lactococcus lactis subsp. lactis (strain IL1403) (Streptococcus lactis) protein is Carbamoyl phosphate synthase small chain.